A 148-amino-acid chain; its full sequence is DnaJ homolog subfamily C member 24 (148 aa).

The J domain maps to 10–81 (DWYSILGADP…ETKKKYDLQR (72 aa)). The DPH-type MB domain occupies 92–147 (VDAQVRLEEMSWNQGDESFFLSCRCGGKYTVSKDEAQEATLISCDACSLIVELLHQ). The Zn(2+) site is built by C114, C116, C135, and C138.

The protein belongs to the DPH4 family. As to quaternary structure, monomer and homooligomer. Iron binding promotes oligomerization. As to expression, detected in heart, brain, spleen, lung, liver, kidney and testis.

It localises to the cytoplasm. The protein localises to the cytoskeleton. Its pathway is protein modification; peptidyl-diphthamide biosynthesis. Functionally, the iron-bound form is redox-active and can function as electron carrier. Stimulates the ATPase activity of several Hsp70-type chaperones. This ability is enhanced by iron-binding. Plays a role in the diphthamide biosynthesis, a post-translational modification of histidine which occurs in translation elongation factor 2 (EEF2). In Mus musculus (Mouse), this protein is DnaJ homolog subfamily C member 24 (Dnajc24).